The primary structure comprises 99 residues: DNA-directed RNA polymerase subunit omega (99 aa).

It belongs to the RNA polymerase subunit omega family. As to quaternary structure, the RNAP catalytic core consists of 2 alpha, 1 beta, 1 beta' and 1 omega subunit. When a sigma factor is associated with the core the holoenzyme is formed, which can initiate transcription.

It carries out the reaction RNA(n) + a ribonucleoside 5'-triphosphate = RNA(n+1) + diphosphate. Its function is as follows. Promotes RNA polymerase assembly. Latches the N- and C-terminal regions of the beta' subunit thereby facilitating its interaction with the beta and alpha subunits. This Deinococcus geothermalis (strain DSM 11300 / CIP 105573 / AG-3a) protein is DNA-directed RNA polymerase subunit omega.